The primary structure comprises 233 residues: Small ribosomal subunit protein uS3 (233 aa).

Residues 39 to 107 form the KH type-2 domain; sequence VRQFLMKTLE…PVQINISEVR (69 aa).

Belongs to the universal ribosomal protein uS3 family. Part of the 30S ribosomal subunit. Forms a tight complex with proteins S10 and S14.

Binds the lower part of the 30S subunit head. Binds mRNA in the 70S ribosome, positioning it for translation. The sequence is that of Small ribosomal subunit protein uS3 from Buchnera aphidicola subsp. Acyrthosiphon pisum (strain 5A).